The chain runs to 352 residues: N-terminal EF-hand calcium-binding protein 1 (352 aa).

Ser-4 bears the Phosphoserine mark. EF-hand domains follow at residues 26–61 and 60–95; these read KGMS…GVLS and LSGE…HLGE. 5 residues coordinate Ca(2+): Asp-39, Asn-41, Asp-43, Lys-45, and Glu-50. The stretch at 135–163 forms a coiled coil; sequence LLKETLNQLQSLQNSLECAMETTEEQTRQ. Positions 155 to 202 are disordered; sequence ETTEEQTRQERQGPSKPEVLSIQWPGKRSSRRVQRHNSFSPNSPQFNV. The span at 190–202 shows a compositional bias: polar residues; the sequence is HNSFSPNSPQFNV. Ser-192 and Ser-197 each carry phosphoserine. The stretch at 209–275 forms a coiled coil; that stretch reads EEDNQWMTQI…EEFQLALKHY (67 aa). The ABM domain maps to 252 to 340; that stretch reads MLVQRQMSVT…LETPELTSTM (89 aa).

In terms of assembly, interacts with STX1. May interact with CPNE6.

The protein localises to the cytoplasm. This is N-terminal EF-hand calcium-binding protein 1 (Necab1) from Rattus norvegicus (Rat).